The primary structure comprises 490 residues: Bifunctional protein HldE (490 aa).

Residues 1–330 are ribokinase; the sequence is MERKNVESLF…GSLGFQHGEG (330 aa). 205-208 provides a ligand contact to ATP; the sequence is NRKE. Residue D275 is part of the active site. The cytidylyltransferase stretch occupies residues 356–490; it reads FTNGCFDLLH…EKILKAYGEE (135 aa).

The protein in the N-terminal section; belongs to the carbohydrate kinase PfkB family. It in the C-terminal section; belongs to the cytidylyltransferase family. In terms of assembly, homodimer.

The enzyme catalyses D-glycero-beta-D-manno-heptose 7-phosphate + ATP = D-glycero-beta-D-manno-heptose 1,7-bisphosphate + ADP + H(+). It carries out the reaction D-glycero-beta-D-manno-heptose 1-phosphate + ATP + H(+) = ADP-D-glycero-beta-D-manno-heptose + diphosphate. It functions in the pathway nucleotide-sugar biosynthesis; ADP-L-glycero-beta-D-manno-heptose biosynthesis; ADP-L-glycero-beta-D-manno-heptose from D-glycero-beta-D-manno-heptose 7-phosphate: step 1/4. Its pathway is nucleotide-sugar biosynthesis; ADP-L-glycero-beta-D-manno-heptose biosynthesis; ADP-L-glycero-beta-D-manno-heptose from D-glycero-beta-D-manno-heptose 7-phosphate: step 3/4. Functionally, catalyzes the phosphorylation of D-glycero-D-manno-heptose 7-phosphate at the C-1 position to selectively form D-glycero-beta-D-manno-heptose-1,7-bisphosphate. In terms of biological role, catalyzes the ADP transfer from ATP to D-glycero-beta-D-manno-heptose 1-phosphate, yielding ADP-D-glycero-beta-D-manno-heptose. The chain is Bifunctional protein HldE from Geobacter sulfurreducens (strain ATCC 51573 / DSM 12127 / PCA).